The primary structure comprises 236 residues: 2-C-methyl-D-erythritol 4-phosphate cytidylyltransferase (236 aa).

The protein belongs to the IspD/TarI cytidylyltransferase family. IspD subfamily.

It carries out the reaction 2-C-methyl-D-erythritol 4-phosphate + CTP + H(+) = 4-CDP-2-C-methyl-D-erythritol + diphosphate. The protein operates within isoprenoid biosynthesis; isopentenyl diphosphate biosynthesis via DXP pathway; isopentenyl diphosphate from 1-deoxy-D-xylulose 5-phosphate: step 2/6. In terms of biological role, catalyzes the formation of 4-diphosphocytidyl-2-C-methyl-D-erythritol from CTP and 2-C-methyl-D-erythritol 4-phosphate (MEP). The polypeptide is 2-C-methyl-D-erythritol 4-phosphate cytidylyltransferase (Burkholderia multivorans (strain ATCC 17616 / 249)).